Consider the following 502-residue polypeptide: Acetylcholine receptor subunit alpha-type unc-63 (502 aa).

The signal sequence occupies residues 1 to 23 (MGPNDHGFAYILIFLLLSPPTHA). The Extracellular portion of the chain corresponds to 24–263 (NRDANRLFED…HLRRKTLFYT (240 aa)). Asn136 carries N-linked (GlcNAc...) asparagine glycosylation. Cys151 and Cys165 are joined by a disulfide. The next 3 helical transmembrane spans lie at 264 to 284 (VNLI…FYLP), 293 to 313 (LCIS…EIIP), and 326 to 346 (LLFT…TLNV). The Cytoplasmic segment spans residues 347–470 (HYRSPTTHTM…WKYISVVMDR (124 aa)). Residues 471–491 (IFLITFTFACAFGTVVIIARA) traverse the membrane as a helical segment.

This sequence belongs to the ligand-gated ion channel (TC 1.A.9) family. Acetylcholine receptor (TC 1.A.9.1) subfamily. Component of nicotinic acetylcholine receptor. In muscles, composed of 2 non-alpha subunits lev-1 and unc-29, and 3 alpha subunits unc-38, unc-63 and lev-8. In cholinergic motoneurons, composed of 2 non-alpha subunits acr-2 and acr-3, and 3 alpha subunits unc-38, unc-63 and acr-12. Interacts with lev-10. In terms of tissue distribution, expressed in body wall muscles, in vulval muscles and in neurons.

It is found in the postsynaptic cell membrane. The protein resides in the cell membrane. Alpha subunit of nicotinic acetylcholine receptor (nAChR). Probably acts in cholinergic motoneurons to regulate presynaptic neurotransmitter release, thereby ensuring normal level of excitation of cholinergic motoneurons during locomotion. Involved in nAChR sensitivity to nicotine and levamisole. The polypeptide is Acetylcholine receptor subunit alpha-type unc-63 (unc-63) (Caenorhabditis elegans).